The sequence spans 659 residues: L-type lectin-domain containing receptor kinase V.7 (659 aa).

The first 25 residues, M1–G25, serve as a signal peptide directing secretion. A legume-lectin like region spans residues N22–S244. Topologically, residues N26 to R275 are extracellular. Residues N45, N64, N110, and N192 are each glycosylated (N-linked (GlcNAc...) asparagine). The chain crosses the membrane as a helical span at residues I276–F296. Topologically, residues V297–R659 are cytoplasmic. In terms of domain architecture, Protein kinase spans F333–L595. ATP contacts are provided by residues L339–V347 and K362. D462 functions as the Proton acceptor in the catalytic mechanism.

In the C-terminal section; belongs to the protein kinase superfamily. Ser/Thr protein kinase family. This sequence in the N-terminal section; belongs to the leguminous lectin family.

It is found in the cell membrane. It catalyses the reaction L-seryl-[protein] + ATP = O-phospho-L-seryl-[protein] + ADP + H(+). It carries out the reaction L-threonyl-[protein] + ATP = O-phospho-L-threonyl-[protein] + ADP + H(+). In terms of biological role, involved in resistance response to the pathogenic oomycetes Phytophthora infestans and Phytophthora capsici and to the pathogenic bacteria Pseudomonas syringae. The sequence is that of L-type lectin-domain containing receptor kinase V.7 from Arabidopsis thaliana (Mouse-ear cress).